The chain runs to 1284 residues: Integrator complex subunit 6 (1284 aa).

Residues 3-134 (IILFLVDTSS…PSVIIVITDG (132 aa)) form the VWFA domain. Disordered stretches follow at residues 653–824 (DVAP…GMSN), 864–895 (ETGETEAVPGGASLPGASSANEPSSIGASPAV), 1053–1086 (TSSGSSVGAGASNSNLNGNGSTESGGGVSSDDHA), and 1125–1180 (NNSS…PGQS). Residues 690–721 (SPGGGSGPGMPGMPGMGGGMSGLMLGAGGSGG) are compositionally biased toward gly residues. 2 stretches are compositionally biased toward low complexity: residues 752–781 (DSRSSSSGSESSTTGSAPGSPIPGATSSIS) and 803–824 (NSNSSFVSSTSEASASDSGMSN). The segment covering 879–890 (GASSANEPSSIG) has biased composition (polar residues). 2 stretches are compositionally biased toward low complexity: residues 1053 to 1074 (TSSGSSVGAGASNSNLNGNGST) and 1125 to 1141 (NNSSAAGAASGSTLSNN). A compositionally biased stretch (polar residues) spans 1159–1171 (INSSCGSSPTHNN).

The protein belongs to the Integrator subunit 6 family. As to quaternary structure, belongs to the multiprotein complex Integrator, at least composed of IntS1, IntS2, IntS3, IntS4, omd/IntS5, IntS6, defl/IntS7, IntS8, IntS9, IntS10, IntS11, IntS12, asun/IntS13, IntS14 and IntS15. The core complex associates with protein phosphatase 2A subunits mts/PP2A and Pp2A-29B, to form the Integrator-PP2A (INTAC) complex.

The protein resides in the nucleus. Component of the integrator complex, a multiprotein complex that terminates RNA polymerase II (Pol II) transcription in the promoter-proximal region of genes. The integrator complex provides a quality checkpoint during transcription elongation by driving premature transcription termination of transcripts that are unfavorably configured for transcriptional elongation: the complex terminates transcription by (1) catalyzing dephosphorylation of the C-terminal domain (CTD) of Pol II subunit Polr2A/Rbp1 and Spt5, and (2) degrading the exiting nascent RNA transcript via endonuclease activity. The integrator complex is also involved in the 3'-end processing of the U7 snRNA, and also the spliceosomal snRNAs U1, U2, U4 and U5. Within the integrator complex, IntS6 acts as a substrate adapter for protein phosphatase 2A (PP2A). The chain is Integrator complex subunit 6 from Drosophila melanogaster (Fruit fly).